The primary structure comprises 106 residues: UPF0145 protein Pput_2816 (106 aa).

This sequence belongs to the UPF0145 family.

The protein is UPF0145 protein Pput_2816 of Pseudomonas putida (strain ATCC 700007 / DSM 6899 / JCM 31910 / BCRC 17059 / LMG 24140 / F1).